The chain runs to 140 residues: Profilin-1 (140 aa).

The residue at position 2 (alanine 2) is an N-acetylalanine. At serine 28 the chain carries Phosphoserine. Residue lysine 54 forms a Glycyl lysine isopeptide (Lys-Gly) (interchain with G-Cter in SUMO2); alternate linkage. Lysine 54 is covalently cross-linked (Glycyl lysine isopeptide (Lys-Gly) (interchain with G-Cter in ubiquitin); alternate). Position 57 is a phosphoserine (serine 57). Lysine 108 carries the post-translational modification N6-acetyllysine. Residue tyrosine 129 is modified to Phosphotyrosine. At serine 138 the chain carries Phosphoserine; by ROCK1.

Belongs to the profilin family. In terms of assembly, found in a complex with XPO6, Ran, ACTB and PFN1. Interacts with ACTB. Interacts with VASP. Interacts with HTT. Interacts with SH3BGRL. Occurs in many kinds of cells as a complex with monomeric actin in a 1:1 ratio. Interacts with ACTMAP. In terms of processing, phosphorylation at Ser-138 reduces its affinity for G-actin and blocks its interaction with HTT, reducing its ability to inhibit androgen receptor (AR) and HTT aggregation.

It localises to the cytoplasm. The protein resides in the cytoskeleton. Functionally, binds to actin and affects the structure of the cytoskeleton. At high concentrations, profilin prevents the polymerization of actin, whereas it enhances it at low concentrations. By binding to PIP2, it inhibits the formation of IP3 and DG. Inhibits androgen receptor (AR) and HTT aggregation and binding of G-actin is essential for its inhibition of AR. In Mus musculus (Mouse), this protein is Profilin-1 (Pfn1).